Reading from the N-terminus, the 347-residue chain is Ion-translocating oxidoreductase complex subunit D (347 aa).

4 helical membrane-spanning segments follow: residues 15–35 (IMFL…YFFG), 36–56 (IGTL…EIII), 84–104 (IPPL…IVVA), and 114–134 (NIFN…PVYM). At Thr-182 the chain carries FMN phosphoryl threonine. A run of 5 helical transmembrane segments spans residues 217–237 (CINI…IICW), 239–259 (IPIS…FYSK), 261–281 (LFMS…AFFI), 289–309 (ACNN…VWII), and 315–335 (YPDA…LVDY).

The protein belongs to the NqrB/RnfD family. As to quaternary structure, the complex is composed of six subunits: RnfA, RnfB, RnfC, RnfD, RnfE and RnfG. FMN is required as a cofactor.

The protein localises to the cell inner membrane. In terms of biological role, part of a membrane-bound complex that couples electron transfer with translocation of ions across the membrane. The polypeptide is Ion-translocating oxidoreductase complex subunit D (Buchnera aphidicola subsp. Acyrthosiphon pisum (strain 5A)).